The primary structure comprises 107 residues: Nucleoid-associated protein GDI3467/Gdia_2910 (107 aa).

Belongs to the YbaB/EbfC family. As to quaternary structure, homodimer.

The protein resides in the cytoplasm. It is found in the nucleoid. In terms of biological role, binds to DNA and alters its conformation. May be involved in regulation of gene expression, nucleoid organization and DNA protection. This chain is Nucleoid-associated protein GDI3467/Gdia_2910, found in Gluconacetobacter diazotrophicus (strain ATCC 49037 / DSM 5601 / CCUG 37298 / CIP 103539 / LMG 7603 / PAl5).